The chain runs to 173 residues: Histone deacetylase complex subunit SAP30 homolog (173 aa).

An Atypical zinc finger spans residues 21–69 (CCLLDDGDRCRNQAGNASYSKRIQKTVTQRRLKLSIDTAARHIYICDFH).

It belongs to the SAP30 family. In terms of assembly, component of the class 1 Sin3-histone deacetylase complex (HDAC).

The protein localises to the nucleus. Functionally, required for the function of the class 1 Sin3-histone deacetylase complex (HDAC). This chain is Histone deacetylase complex subunit SAP30 homolog, found in Aedes aegypti (Yellowfever mosquito).